Reading from the N-terminus, the 68-residue chain is Protein ShdD (68 aa).

Its function is as follows. Involved in the non-oxidative decarboxylation and detoxification of phenolic derivatives under anaerobic conditions, however the precise biochemical function of ShdD in metabolism of phenolic acid is unknown. This Sedimentibacter hydroxybenzoicus (Clostridium hydroxybenzoicum) protein is Protein ShdD.